The primary structure comprises 128 residues: Cytochrome c-type biogenesis protein CcmE (128 aa).

Residues 1–8 lie on the Cytoplasmic side of the membrane; that stretch reads MQKRVRNR. The chain crosses the membrane as a helical; Signal-anchor for type II membrane protein span at residues 9–29; it reads LITIIICFCSAFLGISIILYN. At 30–128 the chain is on the periplasmic side; the sequence is LEKNIVFFLP…KHDENYRPPQ (99 aa). H120 and Y124 together coordinate heme.

Belongs to the CcmE/CycJ family.

The protein localises to the cell inner membrane. In terms of biological role, heme chaperone required for the biogenesis of c-type cytochromes. Transiently binds heme delivered by CcmC and transfers the heme to apo-cytochromes in a process facilitated by CcmF and CcmH. In Rickettsia rickettsii (strain Iowa), this protein is Cytochrome c-type biogenesis protein CcmE.